The primary structure comprises 132 residues: UPF0299 membrane protein YohJ (132 aa).

4 helical membrane passes run 8–28 (IWQYVRAFVLIYACLYAGIFI), 31–51 (LLPVTIPGSIIGMLILFVLLA), 63–83 (GCYLLIRYMALLFVPIGVGVM), and 93–113 (FGPVVVSCAISTLVVFLVVSW).

Belongs to the UPF0299 family.

Its subcellular location is the cell inner membrane. In Escherichia fergusonii (strain ATCC 35469 / DSM 13698 / CCUG 18766 / IAM 14443 / JCM 21226 / LMG 7866 / NBRC 102419 / NCTC 12128 / CDC 0568-73), this protein is UPF0299 membrane protein YohJ.